Here is a 480-residue protein sequence, read N- to C-terminus: Serine carboxypeptidase-like 35 (480 aa).

The signal sequence occupies residues 1 to 20; it reads MKKNALWLLCILVLPAIACG. Residues Asn-79 and Asn-146 are each glycosylated (N-linked (GlcNAc...) asparagine). 3 cysteine pairs are disulfide-bonded: Cys-95/Cys-363, Cys-257/Cys-270, and Cys-294/Cys-331. Ser-188 is an active-site residue. An N-linked (GlcNAc...) asparagine glycan is attached at Asn-265. N-linked (GlcNAc...) asparagine glycosylation is present at Asn-352. Residues Asp-399 and His-452 contribute to the active site.

The protein belongs to the peptidase S10 family. As to expression, expressed in seedlings, flowers and siliques.

Its subcellular location is the secreted. In terms of biological role, probable carboxypeptidase. The sequence is that of Serine carboxypeptidase-like 35 (SCPL35) from Arabidopsis thaliana (Mouse-ear cress).